Reading from the N-terminus, the 561-residue chain is Asparagine synthetase [glutamine-hydrolyzing] (561 aa).

Catalysis depends on Cys2, which acts as the For GATase activity. Positions 2 to 191 constitute a Glutamine amidotransferase type-2 domain; sequence CGIWALFGSD…PGHYEVLDLK (190 aa). L-glutamine is bound by residues 49-53, 75-77, and Asp97; these read RLAVV and NGE. The region spanning 213–536 is the Asparagine synthetase domain; the sequence is HAIYDSVEKL…PGRADWLTHY (324 aa). ATP contacts are provided by residues Leu256, Ile288, and 363–364; that span reads SG. Lys385 bears the N6-acetyllysine mark. At Thr545 the chain carries Phosphothreonine. Ser557 is modified (phosphoserine).

The enzyme catalyses L-aspartate + L-glutamine + ATP + H2O = L-asparagine + L-glutamate + AMP + diphosphate + H(+). It participates in amino-acid biosynthesis; L-asparagine biosynthesis; L-asparagine from L-aspartate (L-Gln route): step 1/1. The sequence is that of Asparagine synthetase [glutamine-hydrolyzing] (Asns) from Rattus norvegicus (Rat).